The primary structure comprises 116 residues: Large ribosomal subunit protein P2 (116 aa).

The segment at 60 to 116 (GKLSSMPSGGGVAAAAGGGGAAAGGGGAAPAAEEKKEEKKEESEEESDDDMGFGLFD) is disordered. Positions 67-87 (SGGGVAAAAGGGGAAAGGGGA) are enriched in gly residues. The segment covering 91–101 (AEEKKEEKKEE) has biased composition (basic and acidic residues).

Belongs to the eukaryotic ribosomal protein P1/P2 family. P1 and P2 exist as dimers at the large ribosomal subunit. In terms of processing, phosphorylated.

In terms of biological role, plays an important role in the elongation step of protein synthesis. This Branchiostoma floridae (Florida lancelet) protein is Large ribosomal subunit protein P2.